A 139-amino-acid chain; its full sequence is Endoribonuclease YbeY (139 aa).

Residues histidine 107, histidine 111, and aspartate 117 each contribute to the Zn(2+) site.

It belongs to the endoribonuclease YbeY family. Zn(2+) serves as cofactor.

It is found in the cytoplasm. Its function is as follows. Single strand-specific metallo-endoribonuclease involved in late-stage 70S ribosome quality control and in maturation of the 3' terminus of the 16S rRNA. The protein is Endoribonuclease YbeY of Bacteroides fragilis (strain ATCC 25285 / DSM 2151 / CCUG 4856 / JCM 11019 / LMG 10263 / NCTC 9343 / Onslow / VPI 2553 / EN-2).